Consider the following 66-residue polypeptide: uncharacterized protein (66 aa).

Residues 1–20 show a composition bias toward low complexity; it reads MTIINSISNFGSNNSFSNNN. A disordered region spans residues 1-47; the sequence is MTIINSISNFGSNNSFSNNNTVNQKSVIKRSKQMKNDNTSIGSSFKN. Polar residues predominate over residues 36 to 47; sequence NDNTSIGSSFKN.

This is an uncharacterized protein from Dictyostelium discoideum (Social amoeba).